A 119-amino-acid chain; its full sequence is Protein MGF 110-13L-B (119 aa).

A signal peptide spans Met1–Pro16.

The protein belongs to the asfivirus MGF 110 family.

The chain is Protein MGF 110-13L-B from Ornithodoros (relapsing fever ticks).